The following is a 243-amino-acid chain: Venom nerve growth factor 3 (243 aa).

The signal sequence occupies residues 1 to 18; sequence MSMLCYTLIIAFLIGIWA. The propeptide occupies 19–125; it reads APKSEDNVPL…ALNRNIRAKR (107 aa). A compositionally biased stretch (basic and acidic residues) spans 47-66; it reads GLKTSRNTDQRHPAPKKAED. Residues 47–67 form a disordered region; sequence GLKTSRNTDQRHPAPKKAEDQ. 3 cysteine pairs are disulfide-bonded: Cys139–Cys204, Cys182–Cys232, and Cys192–Cys234. 2 N-linked (GlcNAc...) asparagine glycosylation sites follow: Asn148 and Asn151.

Belongs to the NGF-beta family. In terms of assembly, homodimer; non-covalently linked. Expressed by the venom gland.

Its subcellular location is the secreted. Nerve growth factor is important for the development and maintenance of the sympathetic and sensory nervous systems. It stimulates division and differentiation of sympathetic and embryonic sensory neurons as well as basal forebrain cholinergic neurons in the brain. Its relevance in the snake venom is not clear. However, it has been shown to inhibit metalloproteinase-dependent proteolysis of platelet glycoprotein Ib alpha, suggesting a metalloproteinase inhibition to prevent metalloprotease autodigestion and/or protection against prey proteases. Binds a lipid between the two protein chains in the homodimer. The lipid-bound form promotes histamine relase from mouse mast cells, contrary to the lipid-free form. This is Venom nerve growth factor 3 from Tropidechis carinatus (Australian rough-scaled snake).